A 235-amino-acid polypeptide reads, in one-letter code: Small ribosomal subunit protein eS6 (235 aa).

Ser-229 and Ser-230 each carry phosphoserine.

It belongs to the eukaryotic ribosomal protein eS6 family. Phosphorylated.

This Kluyveromyces marxianus (Yeast) protein is Small ribosomal subunit protein eS6 (RPS6).